We begin with the raw amino-acid sequence, 341 residues long: MQDFVNRLWYPKADDCIGYRGIKWLLTPLSLLFWCVSSLRRLLFKLGIKAAVSLPVPVIVVGNITVGGSGKTPTVIYLIELLRAQGLNPGVVSRGYGVKIDGVKIVEPHLGADSVGDEPAMIVARTQVPMVIGSDRVSAAKCLIERFDVDIIISDDGLQHYKMARDVELLILDGERRFGNELLLPAGPLRELTGRQKTVDFTIVNGEAKEGEFQMILEPTRFIPVSPRSELVFEPVEHVVAIAGIGNPERFFTTLAQSGVEVIKTKAFEDHQKFSLTQITQVTGNSPVLMTEKDAVKCRDFAKENWWYLAVDAKLAENFDQRLMDKVRQVIAVKQGNRDVV.

65–72 (TVGGSGKT) contacts ATP.

It belongs to the LpxK family.

It catalyses the reaction a lipid A disaccharide + ATP = a lipid IVA + ADP + H(+). Its pathway is glycolipid biosynthesis; lipid IV(A) biosynthesis; lipid IV(A) from (3R)-3-hydroxytetradecanoyl-[acyl-carrier-protein] and UDP-N-acetyl-alpha-D-glucosamine: step 6/6. Transfers the gamma-phosphate of ATP to the 4'-position of a tetraacyldisaccharide 1-phosphate intermediate (termed DS-1-P) to form tetraacyldisaccharide 1,4'-bis-phosphate (lipid IVA). The chain is Tetraacyldisaccharide 4'-kinase from Shewanella woodyi (strain ATCC 51908 / MS32).